The chain runs to 166 residues: Signal peptidase complex catalytic subunit SEC11 (166 aa).

Residues methionine 1–glutamine 9 lie on the Cytoplasmic side of the membrane. The helical; Signal-anchor for type II membrane protein transmembrane segment at phenylalanine 10–isoleucine 30 threads the bilayer. Residues threonine 31–glutamate 166 lie on the Lumenal side of the membrane. Active-site charge relay system residues include serine 44, histidine 83, and aspartate 108. Residues glycine 152–leucine 163 form a C-terminal short (CTS) helix region.

The protein belongs to the peptidase S26B family. Component of the signal peptidase complex (SPC) composed of a catalytic subunit SEC11 and three accessory subunits SPC1, SPC2 and SPC3. The complex induces a local thinning of the ER membrane which is used to measure the length of the signal peptide (SP) h-region of protein substrates. This ensures the selectivity of the complex towards h-regions shorter than 18-20 amino acids. SPC associates with the translocon complex.

It is found in the endoplasmic reticulum membrane. The catalysed reaction is Cleavage of hydrophobic, N-terminal signal or leader sequences from secreted and periplasmic proteins.. Its function is as follows. Catalytic component of the signal peptidase complex (SPC) which catalyzes the cleavage of N-terminal signal sequences from nascent proteins as they are translocated into the lumen of the endoplasmic reticulum. Specifically cleaves N-terminal signal peptides that contain a hydrophobic alpha-helix (h-region) shorter than 18-20 amino acids. This is Signal peptidase complex catalytic subunit SEC11 (SEC11) from Scheffersomyces stipitis (strain ATCC 58785 / CBS 6054 / NBRC 10063 / NRRL Y-11545) (Yeast).